The following is a 250-amino-acid chain: DNA repair protein RecO (250 aa).

Belongs to the RecO family.

Functionally, involved in DNA repair and RecF pathway recombination. This Rhodospirillum centenum (strain ATCC 51521 / SW) protein is DNA repair protein RecO.